A 194-amino-acid chain; its full sequence is 5-formyltetrahydrofolate cyclo-ligase (194 aa).

ATP contacts are provided by residues Lys6–Arg10, Gly139–Asp146, and Asp177.

Belongs to the 5-formyltetrahydrofolate cyclo-ligase family.

The enzyme catalyses (6S)-5-formyl-5,6,7,8-tetrahydrofolate + ATP = (6R)-5,10-methenyltetrahydrofolate + ADP + phosphate. It functions in the pathway one-carbon metabolism; tetrahydrofolate interconversion. Involved in the removal of 5-formyltetrahydrofolate. In vitro, it is a potent inhibitor of various folate-dependent enzymes in the C1 metabolism network and in vivo it might function as a folate storage. 5-formyltetrahydrofolate is also used as an antifolate rescue agent in cancer chemotherapy. Catalyzes the irreversible ATP-dependent transformation of 5-formyltetrahydrofolate (5-CHO-THF) to form 5,10-methenyltetrahydrofolate (5,10-CH=THF). The reverse reaction is catalyzed by the serine hydroxymethyltransferase GlyA (SHMT). The chain is 5-formyltetrahydrofolate cyclo-ligase from Mycolicibacterium smegmatis (strain ATCC 700084 / mc(2)155) (Mycobacterium smegmatis).